The primary structure comprises 186 residues: Elongation factor P (186 aa).

It belongs to the elongation factor P family.

Its subcellular location is the cytoplasm. It participates in protein biosynthesis; polypeptide chain elongation. Functionally, involved in peptide bond synthesis. Stimulates efficient translation and peptide-bond synthesis on native or reconstituted 70S ribosomes in vitro. Probably functions indirectly by altering the affinity of the ribosome for aminoacyl-tRNA, thus increasing their reactivity as acceptors for peptidyl transferase. This chain is Elongation factor P, found in Shewanella woodyi (strain ATCC 51908 / MS32).